Reading from the N-terminus, the 215-residue chain is A-type ATP synthase subunit E (215 aa).

The protein belongs to the V-ATPase E subunit family. Has multiple subunits with at least A(3), B(3), C, D, E, F, H, I and proteolipid K(x).

The protein resides in the cell membrane. In terms of biological role, component of the A-type ATP synthase that produces ATP from ADP in the presence of a proton gradient across the membrane. The sequence is that of A-type ATP synthase subunit E from Thermofilum pendens (strain DSM 2475 / Hrk 5).